Consider the following 273-residue polypeptide: Probable nicotinate-nucleotide pyrophosphorylase [carboxylating] (273 aa).

Substrate contacts are provided by residues R91, 124-126 (TRK), R148, K158, E188, D209, 235-237 (SGN), and 256-258 (VGA).

The protein belongs to the NadC/ModD family. As to quaternary structure, hexamer formed by 3 homodimers.

The enzyme catalyses nicotinate beta-D-ribonucleotide + CO2 + diphosphate = quinolinate + 5-phospho-alpha-D-ribose 1-diphosphate + 2 H(+). Its pathway is cofactor biosynthesis; NAD(+) biosynthesis; nicotinate D-ribonucleotide from quinolinate: step 1/1. Involved in the catabolism of quinolinic acid (QA). This chain is Probable nicotinate-nucleotide pyrophosphorylase [carboxylating] (nadC), found in Helicobacter pylori (strain ATCC 700392 / 26695) (Campylobacter pylori).